The chain runs to 352 residues: Anthranilate phosphoribosyltransferase (352 aa).

5-phospho-alpha-D-ribose 1-diphosphate-binding positions include glycine 94, 97 to 98 (GS), serine 102, 104 to 107 (NIST), 122 to 130 (KHGNRAVSS), and serine 134. Residue glycine 94 coordinates anthranilate. Serine 106 contacts Mg(2+). Residue asparagine 125 coordinates anthranilate. Arginine 180 lines the anthranilate pocket. Mg(2+) is bound by residues aspartate 239 and glutamate 240.

This sequence belongs to the anthranilate phosphoribosyltransferase family. In terms of assembly, homodimer. Mg(2+) is required as a cofactor.

The enzyme catalyses N-(5-phospho-beta-D-ribosyl)anthranilate + diphosphate = 5-phospho-alpha-D-ribose 1-diphosphate + anthranilate. It functions in the pathway amino-acid biosynthesis; L-tryptophan biosynthesis; L-tryptophan from chorismate: step 2/5. In terms of biological role, catalyzes the transfer of the phosphoribosyl group of 5-phosphorylribose-1-pyrophosphate (PRPP) to anthranilate to yield N-(5'-phosphoribosyl)-anthranilate (PRA). The sequence is that of Anthranilate phosphoribosyltransferase from Citrifermentans bemidjiense (strain ATCC BAA-1014 / DSM 16622 / JCM 12645 / Bem) (Geobacter bemidjiensis).